Reading from the N-terminus, the 301-residue chain is GTPase Era (301 aa).

In terms of domain architecture, Era-type G spans 7–175 (YCGFIAIVGR…AAIVRKHLPE (169 aa)). Residues 15–22 (GRPNVGKS) form a G1 region. 15-22 (GRPNVGKS) is a binding site for GTP. The tract at residues 41–45 (QTTRH) is G2. A G3 region spans residues 62-65 (DTPG). GTP is bound by residues 62–66 (DTPGL) and 124–127 (NKVD). Residues 124-127 (NKVD) form a G4 region. Positions 154-156 (ISA) are G5. In terms of domain architecture, KH type-2 spans 206 to 283 (LGAELPYSVT…HLELWVKVKS (78 aa)).

Belongs to the TRAFAC class TrmE-Era-EngA-EngB-Septin-like GTPase superfamily. Era GTPase family. As to quaternary structure, monomer.

The protein resides in the cytoplasm. It is found in the cell inner membrane. Functionally, an essential GTPase that binds both GDP and GTP, with rapid nucleotide exchange. Plays a role in 16S rRNA processing and 30S ribosomal subunit biogenesis and possibly also in cell cycle regulation and energy metabolism. In Shigella flexneri, this protein is GTPase Era.